The sequence spans 163 residues: Small ribosomal subunit protein bS18c (163 aa).

Disordered stretches follow at residues 1–54 and 121–163; these read MYTS…PGDR and ITGP…SSDC. The span at 7–48 shows a compositional bias: basic residues; it reads PFHKSKQTFHKSKQTFRKSKQTFRKFKQPFRKPKQPFRRRPR. Residues 140-163 are compositionally biased toward low complexity; it reads NSNRNLRNSNQTLRNNNRNLSSDC.

The protein belongs to the bacterial ribosomal protein bS18 family. As to quaternary structure, part of the 30S ribosomal subunit.

It localises to the plastid. Its subcellular location is the chloroplast. In Oryza nivara (Indian wild rice), this protein is Small ribosomal subunit protein bS18c.